The following is a 151-amino-acid chain: Aspartate 1-decarboxylase (151 aa).

Serine 26 functions as the Schiff-base intermediate with substrate; via pyruvic acid in the catalytic mechanism. Serine 26 is modified (pyruvic acid (Ser)). Threonine 58 contacts substrate. Residue tyrosine 59 is the Proton donor of the active site. Residue 74 to 76 (GGA) participates in substrate binding.

This sequence belongs to the PanD family. In terms of assembly, heterooctamer of four alpha and four beta subunits. The cofactor is pyruvate. Is synthesized initially as an inactive proenzyme, which is activated by self-cleavage at a specific serine bond to produce a beta-subunit with a hydroxyl group at its C-terminus and an alpha-subunit with a pyruvoyl group at its N-terminus.

The protein localises to the cytoplasm. The catalysed reaction is L-aspartate + H(+) = beta-alanine + CO2. Its pathway is cofactor biosynthesis; (R)-pantothenate biosynthesis; beta-alanine from L-aspartate: step 1/1. Catalyzes the pyruvoyl-dependent decarboxylation of aspartate to produce beta-alanine. This chain is Aspartate 1-decarboxylase, found in Crocosphaera subtropica (strain ATCC 51142 / BH68) (Cyanothece sp. (strain ATCC 51142)).